Consider the following 1330-residue polypeptide: Sister chromatid cohesion protein PDS5 homolog A (1330 aa).

One copy of the HEAT repeat lies at 387–423 (SLVNDQLLGFVRERTLDKRWRVRKEAMMGLAQLYKKY). The segment at 1138–1330 (VNKPLSATGR…AAQRQIDLQR (193 aa)) is disordered. Residues 1160 to 1171 (SNISVNSELSSS) show a composition bias toward low complexity. Over residues 1216-1225 (SDQATQGNST) the composition is skewed to polar residues.

It belongs to the PDS5 family. In terms of assembly, interacts with the cohesin complex. Binds chromatin in a cohesin-dependent manner.

The protein localises to the nucleus. May regulate sister chromatid cohesion during mitosis and couple it to DNA replication. This chain is Sister chromatid cohesion protein PDS5 homolog A, found in Gallus gallus (Chicken).